The sequence spans 143 residues: Large ribosomal subunit protein uL16 (143 aa).

Over residues 1-14 (MLTPKRVKWRRQHR) the composition is skewed to basic residues. The interval 1-23 (MLTPKRVKWRRQHRPDRAGKAKG) is disordered.

This sequence belongs to the universal ribosomal protein uL16 family. As to quaternary structure, part of the 50S ribosomal subunit.

In terms of biological role, binds 23S rRNA and is also seen to make contacts with the A and possibly P site tRNAs. This chain is Large ribosomal subunit protein uL16, found in Desulforudis audaxviator (strain MP104C).